The primary structure comprises 198 residues: MLYPIPIAKLIESYSKLPGIGVKTATRLAFYTIGMSDEDVNDFAKNLLAAKRELTYCSICGNLTDDDPCHICTDSSRDKETILVVEASKDVSAMEKIQEYHGYYHVLHGLISPMNGVGPDDINLKSLITRLMAGEATEVIVATNATADGEATAMYISRILKPAGIKVTRLARGLAVGSDIEYADEVTLLRAIENRTEL.

A C4-type zinc finger spans residues 57–72 (CSICGNLTDDDPCHIC). Positions 80–175 (ETILVVEASK…KVTRLARGLA (96 aa)) constitute a Toprim domain.

This sequence belongs to the RecR family.

Functionally, may play a role in DNA repair. It seems to be involved in an RecBC-independent recombinational process of DNA repair. It may act with RecF and RecO. The chain is Recombination protein RecR from Streptococcus equi subsp. zooepidemicus (strain MGCS10565).